Here is a 632-residue protein sequence, read N- to C-terminus: Chaperone protein HtpG (632 aa).

Residues 1-339 (MTQQTMSFQA…SSDLPLNVSR (339 aa)) are a; substrate-binding. Residues 340 to 559 (EILQESRDVK…DNDMSGYLQR (220 aa)) are b. Residues 560 to 632 (MLKAAGQSAP…TNALLLSRAA (73 aa)) are c.

Belongs to the heat shock protein 90 family. In terms of assembly, homodimer.

It is found in the cytoplasm. Molecular chaperone. Has ATPase activity. The protein is Chaperone protein HtpG of Burkholderia mallei (strain NCTC 10247).